Consider the following 1279-residue polypeptide: ATP-dependent helicase/nuclease subunit A (1279 aa).

The UvrD-like helicase ATP-binding domain maps to 4–499; it reads TKWTDEQRQA…VKLFKNFRSR (496 aa). Position 25 to 32 (25 to 32) interacts with ATP; that stretch reads AGAGAGKT. The UvrD-like helicase C-terminal domain maps to 526 to 853; that stretch reads EEALKVGASY…RIMSIHKSKG (328 aa).

This sequence belongs to the helicase family. AddA subfamily. As to quaternary structure, heterodimer of AddA and AddB/RexB. The cofactor is Mg(2+).

The catalysed reaction is Couples ATP hydrolysis with the unwinding of duplex DNA by translocating in the 3'-5' direction.. It catalyses the reaction ATP + H2O = ADP + phosphate + H(+). In terms of biological role, the heterodimer acts as both an ATP-dependent DNA helicase and an ATP-dependent, dual-direction single-stranded exonuclease. Recognizes the chi site generating a DNA molecule suitable for the initiation of homologous recombination. The AddA nuclease domain is required for chi fragment generation; this subunit has the helicase and 3' -&gt; 5' nuclease activities. This is ATP-dependent helicase/nuclease subunit A from Clostridium botulinum (strain Kyoto / Type A2).